We begin with the raw amino-acid sequence, 276 residues long: Ribosomal RNA small subunit methyltransferase A (276 aa).

Residues His15, Leu17, Gly42, Glu64, Asp89, and Asn108 each contribute to the S-adenosyl-L-methionine site.

Belongs to the class I-like SAM-binding methyltransferase superfamily. rRNA adenine N(6)-methyltransferase family. RsmA subfamily.

It is found in the cytoplasm. It catalyses the reaction adenosine(1518)/adenosine(1519) in 16S rRNA + 4 S-adenosyl-L-methionine = N(6)-dimethyladenosine(1518)/N(6)-dimethyladenosine(1519) in 16S rRNA + 4 S-adenosyl-L-homocysteine + 4 H(+). Functionally, specifically dimethylates two adjacent adenosines (A1518 and A1519) in the loop of a conserved hairpin near the 3'-end of 16S rRNA in the 30S particle. May play a critical role in biogenesis of 30S subunits. This chain is Ribosomal RNA small subunit methyltransferase A, found in Prochlorococcus marinus (strain MIT 9312).